Reading from the N-terminus, the 811-residue chain is MEQREDHTKSSEPAFIPSKRTHQMRNIWAWGGPSSTTVNGSSDAVLFSSSLPSVLQFGKLPGKEREYNAQPKDDMFPMMKQPGTNARVADPMDDVAQHLIGNLLPDDEELLAGVIEDFDHVKLRTQVEESEEYDVFRNSGGMELDIDPLESITFGTAKASLVNGTGSSTNQYSIQNGAGTVTGEHPYGEHPSRTLFVRNINSNVEDSELRSLFEPFGDIRSMYTATKHRGFVMISYYDIRHARNAKTALQSKPLRRRKLDIHYSIPKENPSDKDMNQGTLVIFNLEPAVSNEELLQIFGAFGEVREIRETPHKRHHRFIEFYDVRAAESALRSLNKSDIAGKRVKLEPSRPGGARRSFIQHFNHEFEQDETKHNSFQIGSPSANSPPSLWSQLGSPTDENKLNALNETAFNGGMSPLGSNHLSGFSSGYPPMKSPVGKSSYWNNRADNIFHGSPTLHNSHSFPEHHGGIISASPLVSSAASSASTASGFTALTGTSFLWGNNNNLRDHGQPSSIQSQALSNSLFPNNQPQRQSNLYQNLRGSFGASEHFSQFNVGSAPSVFPFESNFGYFSDSPDTSYMRQGKFGGTGPTRVSGSLMTNFGAYPRINVASMQNGSVGFEGLLDRGRNQTVGNSGCQEDSRVQYQLDLEKIIAGKDTRTTLMIKNIPNKYTSNMLLEVIDETHEGTYDFFYLPIDFKNKCNVGYAFINMASPGYIVSFFKAFAGRKWEKFNSEKVVSLAYARIQGKAALVNHFQNSSLMNEDKRCRPMLFDPKHTENNNQILLNGIFISMAQQDATQERHDLPENPREDNFS.

RRM domains are found at residues R193–P266 and G278–P351. A disordered region spans residues T371–T397. Residues N374 to T397 show a composition bias toward polar residues.

In terms of biological role, probable RNA-binding protein that may play a role in growth regulation. The protein is Protein MEI2-like 5 (ML5) of Oryza sativa subsp. japonica (Rice).